The following is a 388-amino-acid chain: Succinate--CoA ligase [ADP-forming] subunit beta (388 aa).

The ATP-grasp domain occupies 9–244 (KQLFARYGLP…QSQEDPREAQ (236 aa)). ATP-binding positions include Lys-46, 53-55 (GRG), Glu-99, Thr-102, and Glu-107. Positions 199 and 213 each coordinate Mg(2+). Residues Asn-264 and 321 to 323 (GIV) contribute to the substrate site.

The protein belongs to the succinate/malate CoA ligase beta subunit family. As to quaternary structure, heterotetramer of two alpha and two beta subunits. It depends on Mg(2+) as a cofactor.

The enzyme catalyses succinate + ATP + CoA = succinyl-CoA + ADP + phosphate. The catalysed reaction is GTP + succinate + CoA = succinyl-CoA + GDP + phosphate. The protein operates within carbohydrate metabolism; tricarboxylic acid cycle; succinate from succinyl-CoA (ligase route): step 1/1. Functionally, succinyl-CoA synthetase functions in the citric acid cycle (TCA), coupling the hydrolysis of succinyl-CoA to the synthesis of either ATP or GTP and thus represents the only step of substrate-level phosphorylation in the TCA. The beta subunit provides nucleotide specificity of the enzyme and binds the substrate succinate, while the binding sites for coenzyme A and phosphate are found in the alpha subunit. This Shigella dysenteriae serotype 1 (strain Sd197) protein is Succinate--CoA ligase [ADP-forming] subunit beta.